Here is a 238-residue protein sequence, read N- to C-terminus: Phosphoribosylaminoimidazole-succinocarboxamide synthase (238 aa).

The protein belongs to the SAICAR synthetase family.

The catalysed reaction is 5-amino-1-(5-phospho-D-ribosyl)imidazole-4-carboxylate + L-aspartate + ATP = (2S)-2-[5-amino-1-(5-phospho-beta-D-ribosyl)imidazole-4-carboxamido]succinate + ADP + phosphate + 2 H(+). The protein operates within purine metabolism; IMP biosynthesis via de novo pathway; 5-amino-1-(5-phospho-D-ribosyl)imidazole-4-carboxamide from 5-amino-1-(5-phospho-D-ribosyl)imidazole-4-carboxylate: step 1/2. In Desulfitobacterium hafniense (strain Y51), this protein is Phosphoribosylaminoimidazole-succinocarboxamide synthase.